A 556-amino-acid chain; its full sequence is Formate--tetrahydrofolate ligase (556 aa).

An ATP-binding site is contributed by 64–71 (TPAGEGKT).

This sequence belongs to the formate--tetrahydrofolate ligase family.

The catalysed reaction is (6S)-5,6,7,8-tetrahydrofolate + formate + ATP = (6R)-10-formyltetrahydrofolate + ADP + phosphate. It functions in the pathway one-carbon metabolism; tetrahydrofolate interconversion. The protein is Formate--tetrahydrofolate ligase of Haemophilus ducreyi (strain 35000HP / ATCC 700724).